Here is a 215-residue protein sequence, read N- to C-terminus: Large ribosomal subunit protein uL4c (215 aa).

Residues 48 to 57 (SQRQGTISTK) show a composition bias toward polar residues. Residues 48-85 (SQRQGTISTKTRSEVRGGGRKPWRQKGTGRARAGSSRS) are disordered. Over residues 65-76 (GGRKPWRQKGTG) the composition is skewed to basic residues.

This sequence belongs to the universal ribosomal protein uL4 family. As to quaternary structure, part of the 50S ribosomal subunit.

The protein resides in the plastid. It is found in the chloroplast. In terms of biological role, probably binds the 23S rRNA. In Trieres chinensis (Marine centric diatom), this protein is Large ribosomal subunit protein uL4c (rpl4).